The chain runs to 463 residues: MENTLVKSLYRETDKYVDQKVQVSGWIRNLRDSKVFGFIELNDGSFFKSVQIVFDTELDNFKEITKLPLSSSIRVEGKFIATPTAKQPFEIKAEKIEIEGLSDSDYPLQKKRHTFEYLRTIAHLRPRTNAFSATFRVRSIAAYAIHKFFQERGFVHVHTPIITGSDTEGAGEMFRVTTHDMNNLPKGEDGQVDDSKDFFGRETNLTVSGQLPAEAYALAFRDVYTFGPTFRAENSNTTRHAAEFWMVEPEIAFAELEDVMDLTEDMLKYAMKYVLEHAPEEMEFFNKFVDKTVLERMNNVINSDFGRITYTEAIKVLQESGADFKYPVEWGIDLQTEHERYLSEQVFKRPVFVTDYPKDIKAFYMRMNDDGKTVAATDLLVPGIGELIGGSQREERMDVLVDRIKELGMKEEDYWWYLELRKYGGTKHAGFGLGFERFLMYITGMGNIRDVIPFPRTPGSAEF.

Belongs to the class-II aminoacyl-tRNA synthetase family. As to quaternary structure, homodimer.

It localises to the cytoplasm. It carries out the reaction tRNA(Asn) + L-asparagine + ATP = L-asparaginyl-tRNA(Asn) + AMP + diphosphate + H(+). This Bacillus cytotoxicus (strain DSM 22905 / CIP 110041 / 391-98 / NVH 391-98) protein is Asparagine--tRNA ligase.